The sequence spans 341 residues: Cell wall mannoprotein PIR1 (341 aa).

A signal peptide spans 1-18 (MQYKKSLVASALVATSLA). A propeptide spanning residues 19-63 (AYAPKDPWSTLTPSATYKGGITDYSSTFGIAVEPIATTASSKAKR) is cleaved from the precursor. PIR1/2/3 repeat units follow at residues 64–82 (AAAI…TKTT), 83–101 (AAAV…TKTK), 102–120 (AAAV…TKTT), 126–144 (AAAV…TKTK), 145–163 (AAAV…TKTT), 164–182 (AAAV…TKTT), 183–201 (AAAV…TNTT), and 202–220 (VAPV…TLTS).

It belongs to the PIR protein family. Covalently linked to beta-1,3-glucan of the inner cell wall layer via an alkali-sensitive ester linkage between the gamma-carboxyl group of glutamic acids, arising from specific glutamines within the PIR1/2/3 repeats, and hydroxyl groups of glucoses of beta-1,3-glucan chains. Post-translationally, O-glycosylated. Extensively O-mannosylated.

The protein resides in the secreted. It is found in the cell wall. Functionally, component of the outer cell wall layer. Required for stability of the cell wall and for optimal growth. Required for resistance against several antifungal and cell wall-perturbing agents and for tolerance to heat shock. The chain is Cell wall mannoprotein PIR1 (PIR1) from Saccharomyces cerevisiae (strain YJM789) (Baker's yeast).